Reading from the N-terminus, the 94-residue chain is Small ribosomal subunit protein uS19 (94 aa).

The segment at 75–94 (SHTRTFKGHAGDKKAAGSKR) is disordered. Positions 83-94 (HAGDKKAAGSKR) are enriched in basic and acidic residues.

This sequence belongs to the universal ribosomal protein uS19 family.

Protein S19 forms a complex with S13 that binds strongly to the 16S ribosomal RNA. This is Small ribosomal subunit protein uS19 from Nitrosomonas europaea (strain ATCC 19718 / CIP 103999 / KCTC 2705 / NBRC 14298).